We begin with the raw amino-acid sequence, 236 residues long: 2-C-methyl-D-erythritol 4-phosphate cytidylyltransferase (236 aa).

It belongs to the IspD/TarI cytidylyltransferase family. IspD subfamily. In terms of assembly, homodimer.

The enzyme catalyses 2-C-methyl-D-erythritol 4-phosphate + CTP + H(+) = 4-CDP-2-C-methyl-D-erythritol + diphosphate. It participates in isoprenoid biosynthesis; isopentenyl diphosphate biosynthesis via DXP pathway; isopentenyl diphosphate from 1-deoxy-D-xylulose 5-phosphate: step 2/6. In terms of biological role, catalyzes the formation of 4-diphosphocytidyl-2-C-methyl-D-erythritol from CTP and 2-C-methyl-D-erythritol 4-phosphate (MEP). This is 2-C-methyl-D-erythritol 4-phosphate cytidylyltransferase from Salmonella agona (strain SL483).